The sequence spans 282 residues: Probable phosphatase C1620.13 (282 aa).

The active-site Tele-phosphohistidine intermediate is the His-61. Glu-135 acts as the Proton donor/acceptor in catalysis.

It belongs to the phosphoglycerate mutase family. BPG-dependent PGAM subfamily.

It is found in the nucleus. This Schizosaccharomyces pombe (strain 972 / ATCC 24843) (Fission yeast) protein is Probable phosphatase C1620.13.